The following is a 222-amino-acid chain: Bone marrow proteoglycan (222 aa).

A signal peptide spans 1-16 (MKLPLLLALLFGAVSA). Residues 17-105 (LHLRSETSTF…VKVVGIPGCQ (89 aa)) constitute a propeptide, acidic. Thr23 is a glycosylation site (O-linked (GalNAc...) threonine; partial). O-linked (GalNAc...) serine glycosylation occurs at Ser24. Residue Thr25 is glycosylated (O-linked (GalNAc...) threonine). Residues 25-75 (TFETPLGAKTLPEDEETPEQEMEETPCRELEEEEEWGSGSEDASKKDGAVE) are disordered. O-linked (GalNAc...) threonine; partial glycosylation occurs at Thr34. The segment covering 37–60 (EDEETPEQEMEETPCRELEEEEEW) has biased composition (acidic residues). O-linked (Xyl...) (chondroitin sulfate) serine glycosylation occurs at Ser62. N-linked (GlcNAc...) asparagine glycosylation is present at Asn86. In terms of domain architecture, C-type lectin spans 104-222 (CQTCRYLLVR…LRRLPFICSY (119 aa)). Cystine bridges form between Cys125-Cys220 and Cys197-Cys212.

As to quaternary structure, in pregnancy serum, the proform exists as a disulfide-linked 2:2 heterotetramer with PAPPA, as a disulfide-linked 2:2 heterotetramer with AGT, and as a complex (probably a 2:2:2 heterohexamer) with AGT and C3dg. Nitrated. As to expression, detected in plasma and urine (at protein level). Detected in placenta (at protein level). High levels of the proform in placenta and pregnancy serum; in placenta, localized to X cells of septa and anchoring villi. Lower levels in a variety of other tissues including kidney, myometrium, endometrium, ovaries, breast, prostate, bone marrow and colon.

The protein localises to the secreted. Its subcellular location is the cytoplasmic vesicle. The protein resides in the secretory vesicle. In terms of biological role, cytotoxin and helminthotoxin. Also induces non-cytolytic histamine release from human basophils. Involved in antiparasitic defense mechanisms and immune hypersensitivity reactions. The proform acts as a proteinase inhibitor, reducing the activity of PAPPA. In Homo sapiens (Human), this protein is Bone marrow proteoglycan (PRG2).